Here is a 354-residue protein sequence, read N- to C-terminus: S-adenosylmethionine:tRNA ribosyltransferase-isomerase (354 aa).

This sequence belongs to the QueA family. In terms of assembly, monomer.

The protein resides in the cytoplasm. It catalyses the reaction 7-aminomethyl-7-carbaguanosine(34) in tRNA + S-adenosyl-L-methionine = epoxyqueuosine(34) in tRNA + adenine + L-methionine + 2 H(+). Its pathway is tRNA modification; tRNA-queuosine biosynthesis. In terms of biological role, transfers and isomerizes the ribose moiety from AdoMet to the 7-aminomethyl group of 7-deazaguanine (preQ1-tRNA) to give epoxyqueuosine (oQ-tRNA). In Salmonella schwarzengrund (strain CVM19633), this protein is S-adenosylmethionine:tRNA ribosyltransferase-isomerase.